A 662-amino-acid chain; its full sequence is Translation factor guf1, mitochondrial (662 aa).

Residues 1-42 (MRGCLQLARWLSAAPNWPASSLLKAPGSSFATRLFTTTSSYK) constitute a mitochondrion transit peptide. The 181-residue stretch at 64 to 244 (ERYRNFCIVA…TVVEKIPAPI (181 aa)) folds into the tr-type G domain. Residues 73 to 80 (AHVDHGKS), 137 to 141 (DTPGH), and 191 to 194 (NKVD) contribute to the GTP site.

It belongs to the TRAFAC class translation factor GTPase superfamily. Classic translation factor GTPase family. LepA subfamily.

The protein localises to the mitochondrion inner membrane. The catalysed reaction is GTP + H2O = GDP + phosphate + H(+). Promotes mitochondrial protein synthesis. May act as a fidelity factor of the translation reaction, by catalyzing a one-codon backward translocation of tRNAs on improperly translocated ribosomes. Binds to mitochondrial ribosomes in a GTP-dependent manner. This is Translation factor guf1, mitochondrial (guf1) from Emericella nidulans (strain FGSC A4 / ATCC 38163 / CBS 112.46 / NRRL 194 / M139) (Aspergillus nidulans).